We begin with the raw amino-acid sequence, 372 residues long: tRNA-specific 2-thiouridylase MnmA (372 aa).

ATP contacts are provided by residues 11-18 (GMSGGVDS) and methionine 37. Residues 97–99 (NPD) are interaction with target base in tRNA. Cysteine 102 serves as the catalytic Nucleophile. The cysteines at positions 102 and 199 are disulfide-linked. Residue glycine 126 participates in ATP binding. Residues 149-151 (KDQ) form an interaction with tRNA region. Cysteine 199 acts as the Cysteine persulfide intermediate in catalysis. Positions 309–310 (RY) are interaction with tRNA.

Belongs to the MnmA/TRMU family.

The protein localises to the cytoplasm. The catalysed reaction is S-sulfanyl-L-cysteinyl-[protein] + uridine(34) in tRNA + AH2 + ATP = 2-thiouridine(34) in tRNA + L-cysteinyl-[protein] + A + AMP + diphosphate + H(+). In terms of biological role, catalyzes the 2-thiolation of uridine at the wobble position (U34) of tRNA, leading to the formation of s(2)U34. The protein is tRNA-specific 2-thiouridylase MnmA of Staphylococcus aureus (strain USA300).